A 242-amino-acid polypeptide reads, in one-letter code: uncharacterized protein (242 aa).

Disordered stretches follow at residues 16-121 (GLYK…GAMA) and 152-178 (PVRPAKLPKGKGRLRRPRQSRFKTQPV). Composition is skewed to pro residues over residues 50 to 64 (PRPPTGPPARYPSPA) and 97 to 113 (EPRPPPESPGAQPPPGP). Basic residues predominate over residues 157–172 (KLPKGKGRLRRPRQSR). Thr-175 is subject to Phosphothreonine. Ser-192, Ser-206, Ser-216, Ser-232, and Ser-238 each carry phosphoserine. The tract at residues 215-242 (QSLSLQREPLGSCKLRNSLDSSDSDSAL) is disordered. Residues 232-242 (SLDSSDSDSAL) show a composition bias toward low complexity.

The protein resides in the cytoplasm. This is an uncharacterized protein from Rattus norvegicus (Rat).